Reading from the N-terminus, the 547-residue chain is Chaperonin GroEL (547 aa).

Residues 30-33 (TLGP), K51, 87-91 (DGTTT), G415, and D495 each bind ATP. Positions 526–547 (KKESAGGGGMPGGMGGMGGMDF) are disordered. Positions 530–547 (AGGGGMPGGMGGMGGMDF) are enriched in gly residues.

This sequence belongs to the chaperonin (HSP60) family. Forms a cylinder of 14 subunits composed of two heptameric rings stacked back-to-back. Interacts with the co-chaperonin GroES.

It is found in the cytoplasm. The enzyme catalyses ATP + H2O + a folded polypeptide = ADP + phosphate + an unfolded polypeptide.. Together with its co-chaperonin GroES, plays an essential role in assisting protein folding. The GroEL-GroES system forms a nano-cage that allows encapsulation of the non-native substrate proteins and provides a physical environment optimized to promote and accelerate protein folding. The chain is Chaperonin GroEL from Hyphomonas neptunium (strain ATCC 15444).